The following is a 217-amino-acid chain: Uridylate kinase (217 aa).

Position 6-10 (6-10 (KISGR)) interacts with ATP. Position 38 (Gly-38) interacts with UMP. Positions 39 and 43 each coordinate ATP. UMP-binding positions include Asp-60 and 107–113 (FQPGQST). Positions 134, 139, and 142 each coordinate ATP.

It belongs to the UMP kinase family. As to quaternary structure, homohexamer.

The protein localises to the cytoplasm. The catalysed reaction is UMP + ATP = UDP + ADP. It functions in the pathway pyrimidine metabolism; CTP biosynthesis via de novo pathway; UDP from UMP (UMPK route): step 1/1. With respect to regulation, inhibited by UTP. Catalyzes the reversible phosphorylation of UMP to UDP. The protein is Uridylate kinase of Pyrobaculum arsenaticum (strain DSM 13514 / JCM 11321 / PZ6).